The following is a 440-amino-acid chain: Cobyrinate a,c-diamide synthase (440 aa).

One can recognise a GATase cobBQ-type domain in the interval 247-428 (RIAIAYDAAF…MHLYFPSNPR (182 aa)). Cysteine 329 functions as the Nucleophile in the catalytic mechanism.

This sequence belongs to the CobB/CbiA family. Mg(2+) serves as cofactor.

It carries out the reaction cob(II)yrinate + 2 L-glutamine + 2 ATP + 2 H2O = cob(II)yrinate a,c diamide + 2 L-glutamate + 2 ADP + 2 phosphate + 2 H(+). Its pathway is cofactor biosynthesis; adenosylcobalamin biosynthesis; cob(II)yrinate a,c-diamide from sirohydrochlorin (anaerobic route): step 10/10. Functionally, catalyzes the ATP-dependent amidation of the two carboxylate groups at positions a and c of cobyrinate, using either L-glutamine or ammonia as the nitrogen source. The chain is Cobyrinate a,c-diamide synthase from Picrophilus torridus (strain ATCC 700027 / DSM 9790 / JCM 10055 / NBRC 100828 / KAW 2/3).